A 62-amino-acid chain; its full sequence is Coiled-coil domain-containing protein YLR146W-A (62 aa).

A coiled-coil region spans residues 14-49 (EHARMLQNEIQQLFAQLRDTNSQIRCDLNEFEQIKE).

The polypeptide is Coiled-coil domain-containing protein YLR146W-A (Saccharomyces cerevisiae (strain ATCC 204508 / S288c) (Baker's yeast)).